The following is a 31-amino-acid chain: Potassium channel toxin alpha-KTx 5.1 (31 aa).

3 disulfide bridges follow: Cys-3/Cys-21, Cys-8/Cys-26, and Cys-12/Cys-28. The segment at 6 to 9 (RMCQ) is [R/K]XCQ motif. His-31 is subject to Histidine amide.

Belongs to the short scorpion toxin superfamily. Potassium channel inhibitor family. Alpha-KTx 05 subfamily. Post-translationally, two disulfide bonds are the minimal requirement needed to produce a nativelike and bio-active conformation in this toxin. The third disulfide provides an additional contribution to structure stabilization and can modulate biological potency depending on its position and the structural regions involved in biological activity. In terms of tissue distribution, expressed by the venom gland.

It localises to the secreted. Its function is as follows. Blocker for the small conductance calcium-activated potassium channels. Shows the best affinity for KCa2.2/KCNN2 (Kd=0.2 nM), followed by KCa2.3/KCNN3 (Kd=1.1 nM) and KCa2.1/KCNN1 (Kd=325 nM). This chain is Potassium channel toxin alpha-KTx 5.1, found in Leiurus hebraeus (Hebrew deathstalker scorpion).